Reading from the N-terminus, the 331-residue chain is Biotin synthase (331 aa).

Residues 48-278 enclose the Radical SAM core domain; that stretch reads FDSQKFEFCS…SAELRLCGGR (231 aa). Positions 66, 70, and 73 each coordinate [4Fe-4S] cluster. Cys110, Cys143, Cys203, and Arg273 together coordinate [2Fe-2S] cluster.

Belongs to the radical SAM superfamily. Biotin synthase family. As to quaternary structure, homodimer. [4Fe-4S] cluster serves as cofactor. It depends on [2Fe-2S] cluster as a cofactor.

The catalysed reaction is (4R,5S)-dethiobiotin + (sulfur carrier)-SH + 2 reduced [2Fe-2S]-[ferredoxin] + 2 S-adenosyl-L-methionine = (sulfur carrier)-H + biotin + 2 5'-deoxyadenosine + 2 L-methionine + 2 oxidized [2Fe-2S]-[ferredoxin]. Its pathway is cofactor biosynthesis; biotin biosynthesis; biotin from 7,8-diaminononanoate: step 2/2. Functionally, catalyzes the conversion of dethiobiotin (DTB) to biotin by the insertion of a sulfur atom into dethiobiotin via a radical-based mechanism. The sequence is that of Biotin synthase from Hydrogenobaculum sp. (strain Y04AAS1).